The following is a 233-amino-acid chain: Riboflavin kinase (233 aa).

Positions 1 to 99 (MSGATSTGDV…YRRIFEDPGE (99 aa)) are unknown. The riboflavin kinase stretch occupies residues 100 to 233 (LALAGTVTSG…DDEVTIRVEA (134 aa)). 109-114 (GMGEGR) provides a ligand contact to CDP. Positions 138 and 140 each coordinate Mg(2+). The FMN site is built by T200 and E208. Position 213 to 216 (213 to 216 (VKLR)) interacts with CDP.

This sequence belongs to the archaeal riboflavin kinase family. Mg(2+) is required as a cofactor.

The enzyme catalyses riboflavin + CTP = CDP + FMN + H(+). It participates in cofactor biosynthesis; FMN biosynthesis; FMN from riboflavin (CTP route): step 1/1. Functionally, catalyzes the CTP-dependent phosphorylation of riboflavin (vitamin B2) to form flavin mononucleotide (FMN). In Halobacterium salinarum (strain ATCC 700922 / JCM 11081 / NRC-1) (Halobacterium halobium), this protein is Riboflavin kinase (ribK).